The sequence spans 425 residues: Elongation factor 1-alpha (425 aa).

The 217-residue stretch at 5–221 (KPHMNLAVIG…DLFKMPDMPT (217 aa)) folds into the tr-type G domain. The segment at 14-21 (GHIDHGKS) is G1. GTP is bound at residue 14–21 (GHIDHGKS). Ser-21 contributes to the Mg(2+) binding site. The G2 stretch occupies residues 70–74 (GITID). The segment at 91-94 (DCPG) is G3. GTP is bound by residues 91-95 (DCPGH) and 146-149 (NKMD). Positions 146-149 (NKMD) are G4. Residues 185-187 (SAF) form a G5 region.

It belongs to the TRAFAC class translation factor GTPase superfamily. Classic translation factor GTPase family. EF-Tu/EF-1A subfamily.

It is found in the cytoplasm. It carries out the reaction GTP + H2O = GDP + phosphate + H(+). GTP hydrolase that promotes the GTP-dependent binding of aminoacyl-tRNA to the A-site of ribosomes during protein biosynthesis. In Methanocorpusculum labreanum (strain ATCC 43576 / DSM 4855 / Z), this protein is Elongation factor 1-alpha.